Reading from the N-terminus, the 335-residue chain is Cobalt-precorrin-5B C(1)-methyltransferase (335 aa).

It belongs to the CbiD family.

It catalyses the reaction Co-precorrin-5B + S-adenosyl-L-methionine = Co-precorrin-6A + S-adenosyl-L-homocysteine. It functions in the pathway cofactor biosynthesis; adenosylcobalamin biosynthesis; cob(II)yrinate a,c-diamide from sirohydrochlorin (anaerobic route): step 6/10. Its function is as follows. Catalyzes the methylation of C-1 in cobalt-precorrin-5B to form cobalt-precorrin-6A. The sequence is that of Cobalt-precorrin-5B C(1)-methyltransferase from Methanospirillum hungatei JF-1 (strain ATCC 27890 / DSM 864 / NBRC 100397 / JF-1).